Here is a 483-residue protein sequence, read N- to C-terminus: Glutamyl-tRNA(Gln) amidotransferase subunit A (483 aa).

Residues K75 and S150 each act as charge relay system in the active site. Catalysis depends on S174, which acts as the Acyl-ester intermediate.

It belongs to the amidase family. GatA subfamily. In terms of assembly, heterotrimer of A, B and C subunits.

It carries out the reaction L-glutamyl-tRNA(Gln) + L-glutamine + ATP + H2O = L-glutaminyl-tRNA(Gln) + L-glutamate + ADP + phosphate + H(+). Functionally, allows the formation of correctly charged Gln-tRNA(Gln) through the transamidation of misacylated Glu-tRNA(Gln) in organisms which lack glutaminyl-tRNA synthetase. The reaction takes place in the presence of glutamine and ATP through an activated gamma-phospho-Glu-tRNA(Gln). The sequence is that of Glutamyl-tRNA(Gln) amidotransferase subunit A from Legionella pneumophila (strain Paris).